The primary structure comprises 52 residues: ADIDVSRNWFVSIDIRKLYLKTDASGYLGPQEAKAKVTLDPLITSIAIGRQF.

The protein operates within aromatic compound metabolism; naphthalene degradation. Its function is as follows. May be involved in the conversion of 2-hydroxy-4-(2'-oxo-3,5-cyclohexadienyl)-buta-2,4-dienoate to cis-O-hydroxybenzylidenepyruvate. DoxH and DoxJ encode different enzymes that may have interchangeable functions. This Pseudomonas putida (Arthrobacter siderocapsulatus) protein is Dibenzothiophene metabolism operon protein NahQ/DoxH (nahQ).